A 445-amino-acid polypeptide reads, in one-letter code: Tubby-like F-box protein 14 (445 aa).

The 59-residue stretch at 56-114 folds into the F-box domain; that stretch reads SSCWANLPPELLRDVIERLEASEAAWPSRKNVVACAAVCRTWRDMCREIVKNPEFCGKI.

This sequence belongs to the TUB family. In terms of tissue distribution, ubiquitous.

This is Tubby-like F-box protein 14 (TULP14) from Oryza sativa subsp. japonica (Rice).